Here is a 453-residue protein sequence, read N- to C-terminus: Major fimbrium subunit FimC (453 aa).

An N-terminal signal peptide occupies residues 1–28; sequence MKMKYFHHPSGLLPRLLLLLLLTMGAVA. The N-palmitoyl cysteine moiety is linked to residue C29. A lipid anchor (S-diacylglycerol cysteine) is attached at C29. Residues 29–56 constitute a propeptide that is removed on maturation; sequence CTKEDNPDQPTSDEVATVKMSLDDVEMR.

The protein belongs to the bacteroidetes fimbrillin superfamily. FimA/Mfa1 family. Fimbriae are composed of a major, structural subunit and the minor components FimC, FimD and FimE. Identified in a complex composed of FimC, FimD and FimE (in vitro). The complex interacts with host extracellular matrix proteins, including fibronectin and type I collagen. Interacts with host CXCR4.

It is found in the fimbrium. It localises to the cell outer membrane. Functionally, minor component of fimbriae. These long, filamentous pili are attached to the cell surface; they mediate biofilm formation, adhesion onto host cells and onto other bacteria that are part of the oral microbiome. They play an important role in invasion of periodontal tissues and are major virulence factors. FimC, FimD and FimE contribute to interaction with host CXCR4 and thereby down-regulate the TLR2-mediated host immune response. The sequence is that of Major fimbrium subunit FimC from Porphyromonas gingivalis (strain ATCC 33277 / DSM 20709 / CIP 103683 / JCM 12257 / NCTC 11834 / 2561).